Here is a 224-residue protein sequence, read N- to C-terminus: Peptidyl-prolyl cis-trans isomerase FKBP3 (224 aa).

A2 bears the N-acetylalanine mark. The residue at position 36 (S36) is a Phosphoserine. A disordered region spans residues 87–119 (NVKLNEDKPKETKSEETPDEGPPKYTKSVLKKG). Positions 89–102 (KLNEDKPKETKSEE) are enriched in basic and acidic residues. K99 is subject to N6-acetyllysine. The PPIase FKBP-type domain maps to 128-224 (GDVVHCWYTG…IFEVELVDID (97 aa)). S152 carries the phosphoserine modification. Position 170 is an N6-acetyllysine (K170).

This sequence belongs to the FKBP-type PPIase family.

Its subcellular location is the nucleus. The catalysed reaction is [protein]-peptidylproline (omega=180) = [protein]-peptidylproline (omega=0). With respect to regulation, inhibited preferentially by rapamycin over FK506. Functionally, FK506- and rapamycin-binding proteins (FKBPs) constitute a family of receptors for the two immunosuppressants which inhibit T-cell proliferation by arresting two distinct cytoplasmic signal transmission pathways. PPIases accelerate the folding of proteins. The sequence is that of Peptidyl-prolyl cis-trans isomerase FKBP3 (FKBP3) from Oryctolagus cuniculus (Rabbit).